The chain runs to 805 residues: Rho GTPase-activating protein 42 (805 aa).

The region spanning 7 to 262 (EFSDSFLDSP…IRSAEQDFKA (256 aa)) is the BAR domain. Residues 225-262 (KQQLQFNLQNTRNNFESTRQEVENLMRRIRSAEQDFKA) adopt a coiled-coil conformation. The 110-residue stretch at 265 to 374 (QWTMEGFLYV…WMEAMDGKEP (110 aa)) folds into the PH domain. In terms of domain architecture, Rho-GAP spans 376–572 (YTLPALLSKK…ILIENYDKIF (197 aa)). Disordered stretches follow at residues 576–600 (PDPNVPLPHPQSHSQSRGGARRSKA), 625–725 (SDTF…SELL), and 765–805 (VSRS…PGSV). The span at 626–654 (DTFSSSPSSTPMGSMESLSSHSSEQNSCS) shows a compositional bias: low complexity. The segment covering 670–693 (LCWTTPSPSTNGPKSPACTTSPDS) has biased composition (polar residues). Residues 694-704 (SSKEDANKTDG) are compositionally biased toward basic and acidic residues. Residues 710–721 (LSTSPGDRSSPA) show a composition bias toward polar residues. Residues 782-793 (PPKDGMRFRDDS) show a composition bias toward basic and acidic residues.

Functionally, may influence blood pressure by functioning as a GTPase-activating protein in vascular smooth muscle. The polypeptide is Rho GTPase-activating protein 42 (Danio rerio (Zebrafish)).